Consider the following 413-residue polypeptide: MKIKQALFTAGYSSFYFDDQQAIKNGAGHDGFIYTGDPVTPGFTSVRQAGECVSVQLILENGAVAVGDCAAVQYSGAGGRDPLFLAEHFIPFLNDHIKPLLEGRDVDAFLPNARFFDKLRIDGNLLHTAVRYGLSQALLDATALASGRLKTEVVCDEWQLPCVPEAIPLFGQSGDDRYIAVDKMILKGVDVLPHALINNVEEKLGFKGEKLREYVRWLSDRILSLRSSPRYHPTLHIDVYGTIGLIFDMDPVRCAEYIASLEKEAQGLPLYIEGPVDAGNKPDQIRMLTAITKELTRLGSGVKIVADEWCNTYQDIVDFTDAGSCHMVQIKTPDLGGIHNIVDAVLYCNKHGMEAYQGGTCNETEISARTCVHVALAARPMRMLIKPGMGFDEGLNIVFNEMNRTIALLQTKD.

Gln172 lines the (2S,3S)-3-methyl-L-aspartate pocket. Residues Asp238, Glu273, and Asp307 each coordinate Mg(2+). Gln329 contributes to the (2S,3S)-3-methyl-L-aspartate binding site. Residue Lys331 is the Proton acceptor of the active site. (2S,3S)-3-methyl-L-aspartate is bound at residue 360 to 361 (TC).

The protein belongs to the methylaspartate ammonia-lyase family. In terms of assembly, homodimer. Mg(2+) is required as a cofactor.

The catalysed reaction is (2S,3S)-3-methyl-L-aspartate = mesaconate + NH4(+). It participates in amino-acid degradation; L-glutamate degradation via mesaconate pathway; acetate and pyruvate from L-glutamate: step 2/4. Its function is as follows. Involved in the methylaspartate cycle. Catalyzes the formation of the alpha,beta-unsaturated bond by the reversible anti elimination of ammonia from L-threo-beta-methylaspartate (L-threo-(2S,3S)-3-methylaspartate) to give mesaconate. The polypeptide is Methylaspartate ammonia-lyase (Citrobacter amalonaticus).